The following is a 57-amino-acid chain: Sec-independent protein translocase protein TatAy (57 aa).

A helical membrane pass occupies residues 1 to 21 (MPIGPGSLAVIAIVALIIFGP).

The protein belongs to the TatA/E family. In terms of assembly, forms a complex with TatCy. Two types of complexes exist: one composed of TatAy and TatCy, and another composed only of TatAy. Cytosolic TatA forms large complexes or aggregates.

It localises to the cell membrane. It is found in the cytoplasm. The protein localises to the cytosol. Functionally, part of the twin-arginine translocation (Tat) system that transports large folded proteins containing a characteristic twin-arginine motif in their signal peptide across membranes. TatA could form the protein-conducting channel of the Tat system. Required for YwbN secretion. The protein is Sec-independent protein translocase protein TatAy of Bacillus subtilis (strain 168).